The primary structure comprises 243 residues: Carboxy-S-adenosyl-L-methionine synthase (243 aa).

S-adenosyl-L-methionine contacts are provided by residues tyrosine 40, 65 to 67, 90 to 91, 118 to 119, asparagine 133, and arginine 200; these read GCS, DN, and DI.

The protein belongs to the class I-like SAM-binding methyltransferase superfamily. Cx-SAM synthase family. In terms of assembly, homodimer.

The catalysed reaction is prephenate + S-adenosyl-L-methionine = carboxy-S-adenosyl-L-methionine + 3-phenylpyruvate + H2O. Functionally, catalyzes the conversion of S-adenosyl-L-methionine (SAM) to carboxy-S-adenosyl-L-methionine (Cx-SAM). The sequence is that of Carboxy-S-adenosyl-L-methionine synthase from Shewanella halifaxensis (strain HAW-EB4).